The primary structure comprises 309 residues: Protein FdhE (309 aa).

The protein belongs to the FdhE family.

The protein resides in the cytoplasm. Functionally, necessary for formate dehydrogenase activity. The polypeptide is Protein FdhE (Salmonella typhimurium (strain LT2 / SGSC1412 / ATCC 700720)).